The primary structure comprises 764 residues: uncharacterized protein (764 aa).

Residues 1-646 lie on the Lumenal side of the membrane; sequence MKEENGFAGF…LTKLYTFPFT (646 aa). The tract at residues 22–173 is disordered; that stretch reads LNDTAPTKSQ…SAITAPSRKV (152 aa). N-linked (GlcNAc...) asparagine glycosylation is present at Asn23. 2 stretches are compositionally biased toward polar residues: residues 25 to 41 and 61 to 82; these read TAPT…NNEG and SEAS…QSPS. Position 80 is a phosphoserine (Ser80). Residues 98–113 are compositionally biased toward acidic residues; it reads ENQENEADEAENEETS. An N-linked (GlcNAc...) asparagine glycan is attached at Asn118. Basic and acidic residues predominate over residues 118–145; that stretch reads NHTENTEEIAEESRPLERTHSGSNHHEA. Residues 158–173 are compositionally biased toward polar residues; the sequence is NTLSQGSAITAPSRKV. In terms of domain architecture, GRAM spans 197–264; the sequence is RDFHRIFKVL…TEIVSVEKKS (68 aa). N-linked (GlcNAc...) asparagine glycosylation is found at Asn240 and Asn330. The segment at 320–406 is disordered; that stretch reads ASGNHHSGSS…DGNSVKKMNE (87 aa). Low complexity predominate over residues 321 to 330; the sequence is SGNHHSGSSN. The segment covering 331–340 has biased composition (polar residues); it reads QSINADSSAG. Positions 352–371 are enriched in acidic residues; sequence ANDESSEDDDEDNNTDEANE. Asn364 and Asn376 each carry an N-linked (GlcNAc...) asparagine glycan. The span at 389 to 399 shows a compositional bias: polar residues; sequence HSDNVVLSDGN. The VASt domain maps to 432–598; sequence LAHVLCSDVV…AFENYKVSPK (167 aa). N-linked (GlcNAc...) asparagine glycans are attached at residues Asn442 and Asn554. Residues 598 to 613 show a composition bias toward basic residues; it reads KGRRKKITKHTKKKNK. A disordered region spans residues 598–626; it reads KGRRKKITKHTKKKNKHASETSVAPEKVD. Residue Asn627 is glycosylated (N-linked (GlcNAc...) asparagine). The chain crosses the membrane as a helical span at residues 647–667; the sequence is IITWLMHPTHLLLVVMFSMLV. Over 668 to 764 the chain is Cytoplasmic; sequence LQWWYMQQIL…LRKLEASGYI (97 aa).

Belongs to the YSP2 family.

The protein resides in the membrane. This is an uncharacterized protein from Schizosaccharomyces pombe (strain 972 / ATCC 24843) (Fission yeast).